We begin with the raw amino-acid sequence, 293 residues long: Glycerophosphodiester phosphodiesterase (293 aa).

The N-terminal stretch at 1-26 (MRKNRILALFVLSLGLLSFMVTPVSA) is a signal peptide. Residues 38–290 (ILTVAHRGAS…NYPDLFHKVK (253 aa)) form the GP-PDE domain. Histidine 43 serves as the catalytic Proton acceptor. 3 residues coordinate sn-glycerol 3-phosphate: histidine 43, arginine 44, and glutamate 70. The Ca(2+) site is built by glutamate 70 and aspartate 72. 3 residues coordinate sn-glycerol 3-phosphate: histidine 85, glutamate 152, and glutamine 188. The active-site Proton donor is the histidine 85. Glutamate 152 is a Ca(2+) binding site.

Belongs to the glycerophosphoryl diester phosphodiesterase family. Ca(2+) serves as cofactor.

It is found in the secreted. It carries out the reaction a sn-glycero-3-phosphodiester + H2O = an alcohol + sn-glycerol 3-phosphate + H(+). Glycerophosphodiester phosphodiesterase hydrolyzes glycerophosphodiesters into glycerol-3-phosphate (G3P) and the corresponding alcohol. Involved in wall teichoic acid (WTA) metabolism during phosphate starvation. Catalyzes the degradation of WTA, enabling the utilization of WTA as a phosphate reserve under limiting conditions. Is highly selective for the poly(gylcerol phosphate) WTA backbone and catalyzes exolytic cleavage of individual monomer units. In vitro is active toward the WTA oligomer mimics glycerophosphoglycerol (GPG) and bis-glycerophosphoglycerol (bGPG). The protein is Glycerophosphodiester phosphodiesterase of Bacillus subtilis (strain 168).